A 385-amino-acid polypeptide reads, in one-letter code: Alanine racemase (385 aa).

Residue K40 is the Proton acceptor; specific for D-alanine of the active site. An N6-(pyridoxal phosphate)lysine modification is found at K40. Residue R139 coordinates substrate. Y268 acts as the Proton acceptor; specific for L-alanine in catalysis. A substrate-binding site is contributed by M315.

It belongs to the alanine racemase family. Requires pyridoxal 5'-phosphate as cofactor.

The enzyme catalyses L-alanine = D-alanine. The protein operates within amino-acid biosynthesis; D-alanine biosynthesis; D-alanine from L-alanine: step 1/1. Functionally, catalyzes the interconversion of L-alanine and D-alanine. May also act on other amino acids. This Anoxybacillus flavithermus (strain DSM 21510 / WK1) protein is Alanine racemase (alr).